The sequence spans 218 residues: Large ribosomal subunit protein uL4 (218 aa).

The tract at residues 55 to 83 (THATKTRGMVSGGGKKPWKQKGTGRARQG) is disordered.

Belongs to the universal ribosomal protein uL4 family. In terms of assembly, part of the 50S ribosomal subunit.

Functionally, one of the primary rRNA binding proteins, this protein initially binds near the 5'-end of the 23S rRNA. It is important during the early stages of 50S assembly. It makes multiple contacts with different domains of the 23S rRNA in the assembled 50S subunit and ribosome. In terms of biological role, forms part of the polypeptide exit tunnel. In Bifidobacterium longum (strain DJO10A), this protein is Large ribosomal subunit protein uL4.